We begin with the raw amino-acid sequence, 262 residues long: MKFLALALTILLAAGTQAFPMQADAPSQLEHVKAALSMYIAQVKLTAQRSIDLLDDTEYKEYKMQLTQSLDNLQQYADATSQSLAPYSEAFGTQLTDATAAVRAEVMKDVEELRSQLEPKRAELKEVLDKHIDEYRKKLEPLIKEHIELRRTEMEAFRAKMEPIVEELRAKVAINVEETKTKLMPIVEIVRAKLTERLEELRTLAAPYAEEYKEQMIKAVGEVREKVSPLSEDFKGQVGPAAEQAKQKLLAFYETISQAMKA.

The N-terminal stretch at 1–18 (MKFLALALTILLAAGTQA) is a signal peptide. The tract at residues 32 to 63 (VKAALSMYIAQVKLTAQRSIDLLDDTEYKEYK) is 3 X approximate tandem repeats. 2 repeat units span residues 64–85 (MQLTQSLDNLQQYADATSQSLA) and 87–107 (YSEAFGTQLTDATAAVRAEVM). Residues 64–262 (MQLTQSLDNL…YETISQAMKA (199 aa)) are 10 X approximate tandem repeats. The 3; half-length repeat unit spans residues 108–118 (KDVEELRSQLE). 5 tandem repeats follow at residues 119–140 (PKRAELKEVLDKHIDEYRKKLE), 141–162 (PLIKEHIELRRTEMEAFRAKME), 163–184 (PIVEELRAKVAINVEETKTKLM), 185–206 (PIVEIVRAKLTERLEELRTLAA), and 207–228 (PYAEEYKEQMIKAVGEVREKVS). The 9; half-length repeat unit spans residues 229–239 (PLSEDFKGQVG). Repeat 10 spans residues 240-262 (PAAEQAKQKLLAFYETISQAMKA).

This sequence belongs to the apolipoprotein A1/A4/E family.

It localises to the secreted. In terms of biological role, participates in the reverse transport of cholesterol from tissues to the liver for excretion by promoting cholesterol efflux from tissues and by acting as a cofactor for the lecithin cholesterol acyltransferase (LCAT). The protein is Apolipoprotein A-I-1 of Oncorhynchus mykiss (Rainbow trout).